We begin with the raw amino-acid sequence, 61 residues long: Large ribosomal subunit protein uL30 (61 aa).

The protein belongs to the universal ribosomal protein uL30 family. In terms of assembly, part of the 50S ribosomal subunit.

In Dichelobacter nodosus (strain VCS1703A), this protein is Large ribosomal subunit protein uL30.